Here is a 252-residue protein sequence, read N- to C-terminus: Ubiquinone biosynthesis O-methyltransferase (252 aa).

Arg-45, Gly-76, Asp-97, and Met-141 together coordinate S-adenosyl-L-methionine.

It belongs to the methyltransferase superfamily. UbiG/COQ3 family.

The enzyme catalyses a 3-demethylubiquinol + S-adenosyl-L-methionine = a ubiquinol + S-adenosyl-L-homocysteine + H(+). The catalysed reaction is a 3-(all-trans-polyprenyl)benzene-1,2-diol + S-adenosyl-L-methionine = a 2-methoxy-6-(all-trans-polyprenyl)phenol + S-adenosyl-L-homocysteine + H(+). It functions in the pathway cofactor biosynthesis; ubiquinone biosynthesis. O-methyltransferase that catalyzes the 2 O-methylation steps in the ubiquinone biosynthetic pathway. The polypeptide is Ubiquinone biosynthesis O-methyltransferase (Caulobacter sp. (strain K31)).